We begin with the raw amino-acid sequence, 131 residues long: Small ribosomal subunit protein uS11 (131 aa).

Belongs to the universal ribosomal protein uS11 family. As to quaternary structure, part of the 30S ribosomal subunit. Interacts with proteins S7 and S18. Binds to IF-3.

In terms of biological role, located on the platform of the 30S subunit, it bridges several disparate RNA helices of the 16S rRNA. Forms part of the Shine-Dalgarno cleft in the 70S ribosome. This is Small ribosomal subunit protein uS11 from Trichormus variabilis (strain ATCC 29413 / PCC 7937) (Anabaena variabilis).